A 478-amino-acid polypeptide reads, in one-letter code: Zinc metalloproteinase/disintegrin ussurin (478 aa).

An N-terminal signal peptide occupies residues 1–20 (MIQVLLVTICLAAFPYQGSS). Residues 21 to 190 (IILESGNVND…KKASPLVVTT (170 aa)) constitute a propeptide that is removed on maturation. One can recognise a Peptidase M12B domain in the interval 193–389 (RYVELVVVAD…RNPQCILNKP (197 aa)). The Ca(2+) site is built by glutamate 196 and aspartate 280. 3 disulfide bridges follow: cysteine 304–cysteine 384, cysteine 344–cysteine 368, and cysteine 346–cysteine 351. Histidine 329 is a binding site for Zn(2+). Glutamate 330 is a catalytic residue. Residues histidine 333 and histidine 339 each contribute to the Zn(2+) site. Residues cysteine 384 and asparagine 387 each contribute to the Ca(2+) site. The propeptide occupies 390–413 (LRTDIVSTPVSGNELLEAGEECDC). A Disintegrin domain is found at 397–478 (TPVSGNELLE…AGCPRNPFHA (82 aa)). 6 disulfides stabilise this stretch: cysteine 411/cysteine 426, cysteine 413/cysteine 421, cysteine 420/cysteine 443, cysteine 434/cysteine 440, cysteine 439/cysteine 464, and cysteine 452/cysteine 471. The Cell attachment site signature appears at 456–458 (RGD).

This sequence belongs to the venom metalloproteinase (M12B) family. P-II subfamily. P-IIa sub-subfamily. In terms of assembly, monomer. It depends on Zn(2+) as a cofactor. Expressed by the venom gland.

The protein localises to the secreted. Functionally, impairs hemostasis in the envenomed animal. Inhibits platelet aggregation induced by ADP, thrombin, platelet-activating factor and collagen. Acts by inhibiting fibrinogen interaction with platelet receptors GPIIb/GPIIIa (ITGA2B/ITGB3). The polypeptide is Zinc metalloproteinase/disintegrin ussurin (Gloydius ussuriensis (Ussuri mamushi)).